A 347-amino-acid polypeptide reads, in one-letter code: Ribosomal RNA small subunit methyltransferase C (347 aa).

The protein belongs to the methyltransferase superfamily. RsmC family. As to quaternary structure, monomer.

It localises to the cytoplasm. The catalysed reaction is guanosine(1207) in 16S rRNA + S-adenosyl-L-methionine = N(2)-methylguanosine(1207) in 16S rRNA + S-adenosyl-L-homocysteine + H(+). Its function is as follows. Specifically methylates the guanine in position 1207 of 16S rRNA in the 30S particle. This is Ribosomal RNA small subunit methyltransferase C from Serratia proteamaculans (strain 568).